We begin with the raw amino-acid sequence, 413 residues long: Serine hydroxymethyltransferase (413 aa).

Residues Leu-119 and 123–125 (GHL) each bind (6S)-5,6,7,8-tetrahydrofolate. At Lys-228 the chain carries N6-(pyridoxal phosphate)lysine. 351–353 (SPF) is a binding site for (6S)-5,6,7,8-tetrahydrofolate.

This sequence belongs to the SHMT family. In terms of assembly, homodimer. The cofactor is pyridoxal 5'-phosphate.

The protein resides in the cytoplasm. The catalysed reaction is (6R)-5,10-methylene-5,6,7,8-tetrahydrofolate + glycine + H2O = (6S)-5,6,7,8-tetrahydrofolate + L-serine. Its pathway is one-carbon metabolism; tetrahydrofolate interconversion. It functions in the pathway amino-acid biosynthesis; glycine biosynthesis; glycine from L-serine: step 1/1. In terms of biological role, catalyzes the reversible interconversion of serine and glycine with tetrahydrofolate (THF) serving as the one-carbon carrier. This reaction serves as the major source of one-carbon groups required for the biosynthesis of purines, thymidylate, methionine, and other important biomolecules. Also exhibits THF-independent aldolase activity toward beta-hydroxyamino acids, producing glycine and aldehydes, via a retro-aldol mechanism. In Clostridium botulinum (strain Okra / Type B1), this protein is Serine hydroxymethyltransferase.